Reading from the N-terminus, the 431-residue chain is Serine--tRNA ligase (431 aa).

238-240 (TSE) contacts L-serine. Residue 269–271 (RSE) coordinates ATP. Glu292 is a binding site for L-serine. 356–359 (EISS) is an ATP binding site. L-serine is bound at residue Ser391.

This sequence belongs to the class-II aminoacyl-tRNA synthetase family. Type-1 seryl-tRNA synthetase subfamily. In terms of assembly, homodimer. The tRNA molecule binds across the dimer.

The protein localises to the cytoplasm. The enzyme catalyses tRNA(Ser) + L-serine + ATP = L-seryl-tRNA(Ser) + AMP + diphosphate + H(+). It catalyses the reaction tRNA(Sec) + L-serine + ATP = L-seryl-tRNA(Sec) + AMP + diphosphate + H(+). Its pathway is aminoacyl-tRNA biosynthesis; selenocysteinyl-tRNA(Sec) biosynthesis; L-seryl-tRNA(Sec) from L-serine and tRNA(Sec): step 1/1. Functionally, catalyzes the attachment of serine to tRNA(Ser). Is also able to aminoacylate tRNA(Sec) with serine, to form the misacylated tRNA L-seryl-tRNA(Sec), which will be further converted into selenocysteinyl-tRNA(Sec). This Leptothrix cholodnii (strain ATCC 51168 / LMG 8142 / SP-6) (Leptothrix discophora (strain SP-6)) protein is Serine--tRNA ligase.